Reading from the N-terminus, the 238-residue chain is Large ribosomal subunit protein uL1 (238 aa).

This sequence belongs to the universal ribosomal protein uL1 family. Part of the 50S ribosomal subunit.

Its function is as follows. Binds directly to 23S rRNA. The L1 stalk is quite mobile in the ribosome, and is involved in E site tRNA release. Functionally, protein L1 is also a translational repressor protein, it controls the translation of the L11 operon by binding to its mRNA. The polypeptide is Large ribosomal subunit protein uL1 (Trichormus variabilis (strain ATCC 29413 / PCC 7937) (Anabaena variabilis)).